Reading from the N-terminus, the 272-residue chain is Shikimate dehydrogenase (NADP(+)) (272 aa).

Shikimate contacts are provided by residues 14–16 and Thr61; that span reads SKS. The Proton acceptor role is filled by Lys65. Residues Asn86 and Asp102 each coordinate shikimate. Residues 126–130, 149–154, Ser189, and Met213 each bind NADP(+); these read GAGGA and NRTFSK. Residue Tyr215 participates in shikimate binding. Gly238 provides a ligand contact to NADP(+).

This sequence belongs to the shikimate dehydrogenase family. As to quaternary structure, homodimer.

The enzyme catalyses shikimate + NADP(+) = 3-dehydroshikimate + NADPH + H(+). Its pathway is metabolic intermediate biosynthesis; chorismate biosynthesis; chorismate from D-erythrose 4-phosphate and phosphoenolpyruvate: step 4/7. Functionally, involved in the biosynthesis of the chorismate, which leads to the biosynthesis of aromatic amino acids. Catalyzes the reversible NADPH linked reduction of 3-dehydroshikimate (DHSA) to yield shikimate (SA). This is Shikimate dehydrogenase (NADP(+)) from Haemophilus influenzae (strain ATCC 51907 / DSM 11121 / KW20 / Rd).